The primary structure comprises 611 residues: DNA mismatch repair protein MutL (611 aa).

It belongs to the DNA mismatch repair MutL/HexB family.

Its function is as follows. This protein is involved in the repair of mismatches in DNA. It is required for dam-dependent methyl-directed DNA mismatch repair. May act as a 'molecular matchmaker', a protein that promotes the formation of a stable complex between two or more DNA-binding proteins in an ATP-dependent manner without itself being part of a final effector complex. The polypeptide is DNA mismatch repair protein MutL (Rickettsia bellii (strain RML369-C)).